Consider the following 447-residue polypeptide: Methyl-coenzyme M reductase I subunit beta (447 aa).

Tyr-371 lines the coenzyme M pocket. Residue Gly-373 participates in coenzyme B binding.

It belongs to the methyl-coenzyme M reductase beta subunit family. MCR is a hexamer of two alpha, two beta, and two gamma chains, forming a dimer of heterotrimers. Requires coenzyme F430 as cofactor.

It is found in the cytoplasm. The enzyme catalyses coenzyme B + methyl-coenzyme M = methane + coenzyme M-coenzyme B heterodisulfide. It participates in one-carbon metabolism; methyl-coenzyme M reduction; methane from methyl-coenzyme M: step 1/1. Component of the methyl-coenzyme M reductase (MCR) I that catalyzes the reductive cleavage of methyl-coenzyme M (CoM-S-CH3 or 2-(methylthio)ethanesulfonate) using coenzyme B (CoB or 7-mercaptoheptanoylthreonine phosphate) as reductant which results in the production of methane and the mixed heterodisulfide of CoB and CoM (CoM-S-S-CoB). This is the final step in methanogenesis. The chain is Methyl-coenzyme M reductase I subunit beta (mcrB) from Methanocaldococcus jannaschii (strain ATCC 43067 / DSM 2661 / JAL-1 / JCM 10045 / NBRC 100440) (Methanococcus jannaschii).